The sequence spans 98 residues: Integration host factor subunit alpha (98 aa).

The protein belongs to the bacterial histone-like protein family. As to quaternary structure, heterodimer of an alpha and a beta chain.

Its function is as follows. This protein is one of the two subunits of integration host factor, a specific DNA-binding protein that functions in genetic recombination as well as in transcriptional and translational control. This chain is Integration host factor subunit alpha, found in Glaesserella parasuis serovar 5 (strain SH0165) (Haemophilus parasuis).